A 391-amino-acid chain; its full sequence is 3-ketoacyl-CoA thiolase (391 aa).

Catalysis depends on C95, which acts as the Acyl-thioester intermediate. Catalysis depends on proton acceptor residues H347 and C377.

The protein belongs to the thiolase-like superfamily. Thiolase family. As to quaternary structure, heterotetramer of two alpha chains (FadB) and two beta chains (FadA).

The protein resides in the cytoplasm. The enzyme catalyses an acyl-CoA + acetyl-CoA = a 3-oxoacyl-CoA + CoA. Its pathway is lipid metabolism; fatty acid beta-oxidation. Its function is as follows. Catalyzes the final step of fatty acid oxidation in which acetyl-CoA is released and the CoA ester of a fatty acid two carbons shorter is formed. This is 3-ketoacyl-CoA thiolase from Pseudomonas fragi.